We begin with the raw amino-acid sequence, 89 residues long: Large ribosomal subunit protein bL27 (89 aa).

Residues 1-21 (MAHKKAGGSSRNGRDSQSKRL) are disordered.

This sequence belongs to the bacterial ribosomal protein bL27 family.

This is Large ribosomal subunit protein bL27 from Rhizobium rhizogenes (strain K84 / ATCC BAA-868) (Agrobacterium radiobacter).